A 241-amino-acid polypeptide reads, in one-letter code: Probable cobalt-factor III C(17)-methyltransferase (241 aa).

It belongs to the precorrin methyltransferase family.

The enzyme catalyses Co(II)-factor III + S-adenosyl-L-methionine + H(+) = Co(II)-factor IV + S-adenosyl-L-homocysteine. It functions in the pathway cofactor biosynthesis; adenosylcobalamin biosynthesis; cob(II)yrinate a,c-diamide from sirohydrochlorin (anaerobic route): step 3/10. Methyltransferase that likely catalyzes the ring contraction and methylation of C-17 in cobalt-factor III to form cobalt-factor IV. May also convert cobalt-precorrin-3 to cobalt-precorrin-4. In Salmonella typhimurium (strain LT2 / SGSC1412 / ATCC 700720), this protein is Probable cobalt-factor III C(17)-methyltransferase (cbiH).